Consider the following 590-residue polypeptide: MHRYRTHTCGALRDSDIDQTVRVSGWCHRIRDHGGLLFIDLRDHYGLTQCVADPDSPAFKDAEKLRAEWVVRIDGRVRRRPEGTDNDDLPTGKVEIFITEIEVLGPAGELPLPVFGEQDYPEDVRLRYRFLDLRREKLHQNIMTRGAIVDAMRKRMKEQGFFEFQTPILTASSPEGARDFLVPSRIHPGKFYALPQAPQQYKQLLMMSGFDRYFQIAPCFRDEDPRADRLPGEFYQLDVEMSFVTQDDVFAAMEPVITGVFEDFAKGKPVTKSWPRIPYFESLRKYGTDKPDLRNPLEMQDVSEHFRGSGFKVFARMLEEERNQVWAIPGPGGGSRAFCDRMNSWAQGEGQPGLGYIMWREGNEGAGPLANNIGPERTEAIRVALGLKAGDAAFFVAGDPAKFVKFAGLARTKVGEELNLIDKDQFALAWVVDFPMYEYNEDDKKVDFSHNPFSMPQGGMDALTSQDPLTIKAFQYDITCNGYEIASGGIRNHRPEAMVKAFEIAGYGEQEVIDRFGGMYRAFQYGAPPHGGMAAGVDRIVMLLCGTNNLREISLFPMNQRAEDLLMGAPSQVAPKQLRELHIRLNLPES.

Glu175 contributes to the L-aspartate binding site. Positions 199–202 (QQYK) are aspartate. L-aspartate-binding residues include Arg221 and His450. Position 221–223 (221–223 (RDE)) interacts with ATP. Position 484 (Glu484) interacts with ATP. Arg491 is a binding site for L-aspartate. 536 to 539 (GVDR) lines the ATP pocket.

It belongs to the class-II aminoacyl-tRNA synthetase family. Type 1 subfamily. As to quaternary structure, homodimer.

It is found in the cytoplasm. The catalysed reaction is tRNA(Asx) + L-aspartate + ATP = L-aspartyl-tRNA(Asx) + AMP + diphosphate. Its function is as follows. Aspartyl-tRNA synthetase with relaxed tRNA specificity since it is able to aspartylate not only its cognate tRNA(Asp) but also tRNA(Asn). Reaction proceeds in two steps: L-aspartate is first activated by ATP to form Asp-AMP and then transferred to the acceptor end of tRNA(Asp/Asn). The chain is Aspartate--tRNA(Asp/Asn) ligase from Rhodopseudomonas palustris (strain HaA2).